The primary structure comprises 573 residues: ATP-dependent RNA helicase RhlB (573 aa).

Positions 9-37 match the Q motif motif; sequence LTFSSFDLHPALVAGLESAGFTRCTPIQA. In terms of domain architecture, Helicase ATP-binding spans 40-220; that stretch reads LPVALPGGDV…YEHMNEPEKL (181 aa). 53-60 serves as a coordination point for ATP; that stretch reads AQTGTGKT. The short motif at 166-169 is the DEAD box element; sequence DEAD. Positions 231–393 constitute a Helicase C-terminal domain; that stretch reads RVRQRIYFPS…PVTTELLTPL (163 aa). The span at 391–400 shows a compositional bias: low complexity; it reads TPLPRTPRAT. The tract at residues 391-559 is disordered; it reads TPLPRTPRAT…AKPSGSPSLL (169 aa). Over residues 402–411 the composition is skewed to acidic residues; sequence EGEEVDDDAG. Residues 419–432 show a composition bias toward basic and acidic residues; the sequence is REAREQRAADEARR. Over residues 435–449 the composition is skewed to gly residues; that stretch reads GRSGPGGASRSGSGG. Over residues 450–461 the composition is skewed to basic and acidic residues; sequence GRRDGAGADGKP. Positions 476–499 are enriched in low complexity; that stretch reads PAAAPSETPVVVAAAAETPAVTAA. A compositionally biased stretch (basic residues) spans 505–514; sequence PRKRRRRRNG. Composition is skewed to low complexity over residues 516-528 and 541-559; these read PVEG…ASTP and VVAK…PSLL.

Belongs to the DEAD box helicase family. RhlB subfamily. In terms of assembly, component of the RNA degradosome, which is a multiprotein complex involved in RNA processing and mRNA degradation.

The protein resides in the cytoplasm. The enzyme catalyses ATP + H2O = ADP + phosphate + H(+). DEAD-box RNA helicase involved in RNA degradation. Has RNA-dependent ATPase activity and unwinds double-stranded RNA. The polypeptide is ATP-dependent RNA helicase RhlB (Xanthomonas campestris pv. campestris (strain B100)).